Reading from the N-terminus, the 715-residue chain is DNA ligase (715 aa).

NAD(+) is bound by residues 47 to 51 (DADYD), 96 to 97 (SL), and Glu-128. Catalysis depends on Lys-130, which acts as the N6-AMP-lysine intermediate. NAD(+) contacts are provided by Arg-151, Glu-188, Lys-306, and Lys-330. Zn(2+)-binding residues include Cys-435, Cys-438, Cys-453, and Cys-459. In terms of domain architecture, BRCT spans 637–715 (RRDTAVAGKT…EDEWLALIGN (79 aa)).

Belongs to the NAD-dependent DNA ligase family. LigA subfamily. Requires Mg(2+) as cofactor. Mn(2+) is required as a cofactor.

It carries out the reaction NAD(+) + (deoxyribonucleotide)n-3'-hydroxyl + 5'-phospho-(deoxyribonucleotide)m = (deoxyribonucleotide)n+m + AMP + beta-nicotinamide D-nucleotide.. Its function is as follows. DNA ligase that catalyzes the formation of phosphodiester linkages between 5'-phosphoryl and 3'-hydroxyl groups in double-stranded DNA using NAD as a coenzyme and as the energy source for the reaction. It is essential for DNA replication and repair of damaged DNA. The polypeptide is DNA ligase (Rhodopseudomonas palustris (strain TIE-1)).